The sequence spans 234 residues: Small ribosomal subunit protein uS3 (234 aa).

Positions 39 to 109 constitute a KH type-2 domain; sequence IRTLINKHYG…EVRIAIYEVK (71 aa).

It belongs to the universal ribosomal protein uS3 family. In terms of assembly, part of the 30S ribosomal subunit. Forms a tight complex with proteins S10 and S14.

Binds the lower part of the 30S subunit head. Binds mRNA in the 70S ribosome, positioning it for translation. The sequence is that of Small ribosomal subunit protein uS3 from Coprothermobacter proteolyticus (strain ATCC 35245 / DSM 5265 / OCM 4 / BT).